Reading from the N-terminus, the 115-residue chain is Pro-neuregulin-4, membrane-bound isoform (115 aa).

Residues Met-1–Phe-62 lie on the Extracellular side of the membrane. In terms of domain architecture, EGF-like spans His-5 to Glu-46. 3 disulfides stabilise this stretch: Cys-9/Cys-23, Cys-17/Cys-34, and Cys-36/Cys-45. The N-linked (GlcNAc...) asparagine glycan is linked to Asn-39. A helical membrane pass occupies residues Glu-63–Cys-83. The Cytoplasmic portion of the chain corresponds to Arg-84 to His-115.

This sequence belongs to the neuregulin family. As to quaternary structure, interacts with ERBB4. Post-translationally, proteolytic cleavage close to the plasma membrane on the external face leads to the release of the soluble growth factor form. Extensive glycosylation precedes the proteolytic cleavage.

The protein localises to the cell membrane. It is found in the secreted. Functionally, low affinity ligand for the ERBB4 tyrosine kinase receptor. Concomitantly recruits ERBB1 and ERBB2 coreceptors, resulting in ligand-stimulated tyrosine phosphorylation and activation of the ERBB receptors. Does not bind to the ERBB1, ERBB2 and ERBB3 receptors. The polypeptide is Pro-neuregulin-4, membrane-bound isoform (NRG4) (Homo sapiens (Human)).